The sequence spans 1066 residues: Elongation factor 3 (1066 aa).

6 HEAT repeats span residues 112–149 (FIFE…VMSP), 151–188 (AAQQ…ACPE), 192–229 (ALMP…LISN), 231–268 (DIER…EVDS), 269–306 (ATLA…LVDN), and 312–353 (PFLG…VTGD). Position 418 (Thr-418) interacts with ADP. ABC transporter domains follow at residues 454 to 672 (EEGE…YAEL) and 699 to 1015 (IKMK…KKEE). Positions 735, 944, 947, and 973 each coordinate ADP. The disordered stretch occupies residues 997–1066 (GHDWTESNSK…YDSADELEDL (70 aa)). The segment covering 1042 to 1054 (RKAKKDRMARKKA) has biased composition (basic residues).

The protein belongs to the ABC transporter superfamily. ABCF family. EF3 subfamily.

The protein resides in the cytoplasm. Its subcellular location is the cytosol. The catalysed reaction is ATP + H2O = ADP + phosphate + H(+). It functions in the pathway protein biosynthesis; polypeptide chain elongation. Functionally, ribosome-dependent ATPase that functions in cytoplasmic translation elongation. Required for the ATP-dependent release of deacylated tRNA from the ribosomal E-site during protein biosynthesis. Stimulates the eEF1A-dependent binding of aminoacyl-tRNA to the ribosomal A-site, which has reduced affinity for tRNA as long as the E-site is occupied. Assists translation termination by stimulating the release of nascent protein from the ribosome by release factors. The polypeptide is Elongation factor 3 (Mycosarcoma maydis (Corn smut fungus)).